A 109-amino-acid polypeptide reads, in one-letter code: Aquaporin-2 (109 aa).

Residues 1 to 6 (SVAFSR) are Cytoplasmic-facing. The chain crosses the membrane as a helical span at residues 7 to 27 (AVLAEFLATLIFVFFGLGSAL). Over 28–35 (SWPQALPS) the chain is Extracellular. A helical transmembrane segment spans residues 36 to 54 (VLQIALAFGLAIGTLVQAL). The Cytoplasmic portion of the chain corresponds to 55–59 (GHVSG). The discontinuously helical intramembrane region spans 60–69 (AHINPAVTVA). The NPA 1 motif lies at 63-65 (NPA). At 70–80 (CLVGCHVSFLR) the chain is on the cytoplasmic side. The helical transmembrane segment at 81–102 (AAFYVAAQLLGAVAGAAILHEI) threads the bilayer. Residues 103–109 (TPPDVRG) are Extracellular-facing.

This sequence belongs to the MIP/aquaporin (TC 1.A.8) family. As to quaternary structure, homotetramer. Serine phosphorylation is necessary and sufficient for expression at the apical membrane. Endocytosis is not phosphorylation-dependent. In terms of processing, N-glycosylated.

It is found in the apical cell membrane. The protein localises to the basolateral cell membrane. Its subcellular location is the cell membrane. It localises to the cytoplasmic vesicle membrane. The protein resides in the golgi apparatus. It is found in the trans-Golgi network membrane. It catalyses the reaction H2O(in) = H2O(out). The enzyme catalyses glycerol(in) = glycerol(out). Functionally, forms a water-specific channel that provides the plasma membranes of renal collecting duct with high permeability to water, thereby permitting water to move in the direction of an osmotic gradient. Plays an essential role in renal water homeostasis. Could also be permeable to glycerol. This is Aquaporin-2 from Dasypus novemcinctus (Nine-banded armadillo).